We begin with the raw amino-acid sequence, 631 residues long: 1-deoxy-D-xylulose-5-phosphate synthase (631 aa).

Thiamine diphosphate is bound by residues histidine 78 and 119–121 (AHS). Mg(2+) is bound at residue aspartate 150. Thiamine diphosphate contacts are provided by residues 151-152 (GA), asparagine 179, tyrosine 286, and glutamate 368. Asparagine 179 contacts Mg(2+).

Belongs to the transketolase family. DXPS subfamily. Homodimer. It depends on Mg(2+) as a cofactor. The cofactor is thiamine diphosphate.

The catalysed reaction is D-glyceraldehyde 3-phosphate + pyruvate + H(+) = 1-deoxy-D-xylulose 5-phosphate + CO2. Its pathway is metabolic intermediate biosynthesis; 1-deoxy-D-xylulose 5-phosphate biosynthesis; 1-deoxy-D-xylulose 5-phosphate from D-glyceraldehyde 3-phosphate and pyruvate: step 1/1. Its function is as follows. Catalyzes the acyloin condensation reaction between C atoms 2 and 3 of pyruvate and glyceraldehyde 3-phosphate to yield 1-deoxy-D-xylulose-5-phosphate (DXP). This is 1-deoxy-D-xylulose-5-phosphate synthase from Verminephrobacter eiseniae (strain EF01-2).